The primary structure comprises 658 residues: Exoribonuclease 2 (658 aa).

An RNB domain is found at 189 to 530 (REDLTSLYFT…VNHRLIKQVL (342 aa)). An S1 motif domain is found at 576–658 (AVEFDCEIAD…ETRSIVGNII (83 aa)).

Belongs to the RNR ribonuclease family. RNase II subfamily.

The protein localises to the cytoplasm. It catalyses the reaction Exonucleolytic cleavage in the 3'- to 5'-direction to yield nucleoside 5'-phosphates.. In terms of biological role, involved in mRNA degradation. Hydrolyzes single-stranded polyribonucleotides processively in the 3' to 5' direction. This is Exoribonuclease 2 from Actinobacillus pleuropneumoniae serotype 7 (strain AP76).